We begin with the raw amino-acid sequence, 508 residues long: Steroid 17-alpha-hydroxylase/17,20 lyase (508 aa).

Asn202 is a substrate binding site. Cys442 lines the heme pocket.

The protein belongs to the cytochrome P450 family. Heme is required as a cofactor.

The protein resides in the endoplasmic reticulum membrane. Its subcellular location is the microsome membrane. The catalysed reaction is a C21-steroid + reduced [NADPH--hemoprotein reductase] + O2 = a 17alpha-hydroxy-C21-steroid + oxidized [NADPH--hemoprotein reductase] + H2O + H(+). It carries out the reaction progesterone + reduced [NADPH--hemoprotein reductase] + O2 = 17alpha-hydroxyprogesterone + oxidized [NADPH--hemoprotein reductase] + H2O + H(+). It catalyses the reaction pregnenolone + reduced [NADPH--hemoprotein reductase] + O2 = 17alpha-hydroxypregnenolone + oxidized [NADPH--hemoprotein reductase] + H2O + H(+). The enzyme catalyses 17alpha-hydroxyprogesterone + reduced [NADPH--hemoprotein reductase] + O2 = androst-4-ene-3,17-dione + acetate + oxidized [NADPH--hemoprotein reductase] + H2O + 2 H(+). The catalysed reaction is 17alpha-hydroxyprogesterone + reduced [NADPH--hemoprotein reductase] + O2 = 16alpha,17alpha-dihydroxyprogesterone + oxidized [NADPH--hemoprotein reductase] + H2O + H(+). It carries out the reaction 16alpha,17alpha-dihydroxyprogesterone + reduced [NADPH--hemoprotein reductase] + O2 = 6beta,16alpha,17alpha-trihydroxyprogesterone + oxidized [NADPH--hemoprotein reductase] + H2O + H(+). It catalyses the reaction 17alpha-hydroxypregnenolone + reduced [NADPH--hemoprotein reductase] + O2 = 3beta-hydroxyandrost-5-en-17-one + acetate + oxidized [NADPH--hemoprotein reductase] + H2O + 2 H(+). The enzyme catalyses 16alpha,17alpha-dihydroxypregnenolone + reduced [NADPH--hemoprotein reductase] + O2 = 3beta,16alpha-dihydroxy-androst-5-en-17-one + acetate + oxidized [NADPH--hemoprotein reductase] + H2O + 2 H(+). The catalysed reaction is 3beta-hydroxyandrost-5-en-17-one + reduced [NADPH--hemoprotein reductase] + O2 = 3beta,16alpha-dihydroxy-androst-5-en-17-one + oxidized [NADPH--hemoprotein reductase] + H2O + H(+). It carries out the reaction androst-4-ene-3,17-dione + reduced [NADPH--hemoprotein reductase] + O2 = 16alpha-hydroxyandrost-4-ene-3,17-dione + oxidized [NADPH--hemoprotein reductase] + H2O + H(+). Its pathway is steroid hormone biosynthesis. The protein operates within steroid biosynthesis; glucocorticoid biosynthesis. With respect to regulation, regulated predominantly by intracellular cAMP levels. The 17,20-lyase activity is stimulated by cytochrome b5, which acts as an allosteric effector increasing the Vmax of the lyase activity. In terms of biological role, a cytochrome P450 monooxygenase involved in corticoid and androgen biosynthesis. Catalyzes 17-alpha hydroxylation of C21 steroids, which is common for both pathways. A second oxidative step, required only for androgen synthesis, involves an acyl-carbon cleavage. The 17-alpha hydroxy intermediates, as part of adrenal glucocorticoids biosynthesis pathway, are precursors of cortisol. Hydroxylates steroid hormones, pregnenolone and progesterone to form 17-alpha hydroxy metabolites, followed by the cleavage of the C17-C20 bond to form C19 steroids, dehydroepiandrosterone (DHEA) and androstenedione. Has 16-alpha hydroxylase activity. Catalyzes 16-alpha hydroxylation of 17-alpha hydroxy pregnenolone, followed by the cleavage of the C17-C20 bond to form 16-alpha-hydroxy DHEA. Also 16-alpha hydroxylates androgens, relevant for estriol synthesis. Mechanistically, uses molecular oxygen inserting one oxygen atom into a substrate, and reducing the second into a water molecule, with two electrons provided by NADPH via cytochrome P450 reductase (CPR; NADPH-ferrihemoprotein reductase). The sequence is that of Steroid 17-alpha-hydroxylase/17,20 lyase (CYP17A1) from Pan troglodytes (Chimpanzee).